A 302-amino-acid polypeptide reads, in one-letter code: UDP-3-O-acyl-N-acetylglucosamine deacetylase (302 aa).

The Zn(2+) site is built by His-78, His-237, and Asp-241. Catalysis depends on His-264, which acts as the Proton donor.

The protein belongs to the LpxC family. It depends on Zn(2+) as a cofactor.

The catalysed reaction is a UDP-3-O-[(3R)-3-hydroxyacyl]-N-acetyl-alpha-D-glucosamine + H2O = a UDP-3-O-[(3R)-3-hydroxyacyl]-alpha-D-glucosamine + acetate. The protein operates within glycolipid biosynthesis; lipid IV(A) biosynthesis; lipid IV(A) from (3R)-3-hydroxytetradecanoyl-[acyl-carrier-protein] and UDP-N-acetyl-alpha-D-glucosamine: step 2/6. Its function is as follows. Catalyzes the hydrolysis of UDP-3-O-myristoyl-N-acetylglucosamine to form UDP-3-O-myristoylglucosamine and acetate, the committed step in lipid A biosynthesis. The sequence is that of UDP-3-O-acyl-N-acetylglucosamine deacetylase from Hahella chejuensis (strain KCTC 2396).